The sequence spans 305 residues: GMP synthase [glutamine-hydrolyzing] subunit B (305 aa).

In terms of domain architecture, GMPS ATP-PPase spans 2-185 (VDVDSFVEDA…LGLEEIISER (184 aa)). ATP is bound at residue 29 to 35 (SGGVDSS).

In terms of assembly, heterodimer composed of a glutamine amidotransferase subunit (A) and a GMP-binding subunit (B).

It carries out the reaction XMP + L-glutamine + ATP + H2O = GMP + L-glutamate + AMP + diphosphate + 2 H(+). It functions in the pathway purine metabolism; GMP biosynthesis; GMP from XMP (L-Gln route): step 1/1. Its function is as follows. Catalyzes the synthesis of GMP from XMP. This Halobacterium salinarum (strain ATCC 29341 / DSM 671 / R1) protein is GMP synthase [glutamine-hydrolyzing] subunit B.